The sequence spans 400 residues: S-adenosylmethionine synthase (400 aa).

An ATP-binding site is contributed by 136-141 (GQGSVD).

Belongs to the AdoMet synthase 2 family. Mg(2+) serves as cofactor.

The catalysed reaction is L-methionine + ATP + H2O = S-adenosyl-L-methionine + phosphate + diphosphate. Its pathway is amino-acid biosynthesis; S-adenosyl-L-methionine biosynthesis; S-adenosyl-L-methionine from L-methionine: step 1/1. In terms of biological role, catalyzes the formation of S-adenosylmethionine from methionine and ATP. The protein is S-adenosylmethionine synthase (mat) of Thermoplasma acidophilum (strain ATCC 25905 / DSM 1728 / JCM 9062 / NBRC 15155 / AMRC-C165).